Here is a 547-residue protein sequence, read N- to C-terminus: Chaperonin GroEL (547 aa).

ATP is bound by residues 30 to 33 (TLGP), lysine 51, 87 to 91 (DGTTT), glycine 415, and aspartate 495. The tract at residues 525–547 (PDEKEAGGGAPDMGGMGGMGGMM) is disordered. Over residues 531-547 (GGGAPDMGGMGGMGGMM) the composition is skewed to gly residues.

Belongs to the chaperonin (HSP60) family. In terms of assembly, forms a cylinder of 14 subunits composed of two heptameric rings stacked back-to-back. Interacts with the co-chaperonin GroES.

Its subcellular location is the cytoplasm. It carries out the reaction ATP + H2O + a folded polypeptide = ADP + phosphate + an unfolded polypeptide.. Functionally, together with its co-chaperonin GroES, plays an essential role in assisting protein folding. The GroEL-GroES system forms a nano-cage that allows encapsulation of the non-native substrate proteins and provides a physical environment optimized to promote and accelerate protein folding. This chain is Chaperonin GroEL, found in Chromohalobacter salexigens (strain ATCC BAA-138 / DSM 3043 / CIP 106854 / NCIMB 13768 / 1H11).